Here is a 439-residue protein sequence, read N- to C-terminus: Large ribosomal subunit protein mL65 (439 aa).

The protein belongs to the mitochondrion-specific ribosomal protein mL65 family. Component of the mitochondrial large ribosomal subunit (mt-LSU). Mature mammalian 55S mitochondrial ribosomes consist of a small (28S) and a large (39S) subunit. The 28S small subunit contains a 12S ribosomal RNA (12S mt-rRNA) and 30 different proteins. The 39S large subunit contains a 16S rRNA (16S mt-rRNA), a copy of mitochondrial valine transfer RNA (mt-tRNA(Val)), which plays an integral structural role, and 52 different proteins. mL65 forms a heterodimer with mL37. As to expression, heart, skeletal muscle, kidney and liver. Lower expression in placenta and peripheral blood leukocytes.

The protein localises to the mitochondrion. The polypeptide is Large ribosomal subunit protein mL65 (MRPS30) (Homo sapiens (Human)).